Consider the following 421-residue polypeptide: MKFSDFSVLGLGALALNAVTVSANTADTALLRTYSTISPSLSEIESAASATEVAEVVSDVEGAAFKRFFIIFLENTDYDKAAGDESLSWLAEQGITLTNYWALTHPSEPNYLASVGGDYFALDDDRFISMPSNVSNIVDLLDTKGISWAEYQEHSPYAGFQGMNFSNQETYASDYVRKHNPLILFDNVVNNDTRLANIKNFEDFNNDVENEKLPQYAFITPNMTNDGHDTTIQFAGKWSKDFLAPLLENDYFMEDTLVLLTFDENETYGIKNKVFSILLGGVIPDELKGTKDDTFYDHYSQLASVEANWDLPHLGRHDGDANVLEIVANATNITNVEVDTTYMINETYIGYLNDYNIELPAPNVTAINRNGQPILDSIKETWEDEYSKQVSESYYTSTTTTVSADVTDAETFSNFYRYRQC.

Residue aspartate 229 is the Proton donor of the active site.

It carries out the reaction a phosphate monoester + H2O = an alcohol + phosphate. The sequence is that of Probable acid phosphatase from Kluyveromyces lactis (strain ATCC 8585 / CBS 2359 / DSM 70799 / NBRC 1267 / NRRL Y-1140 / WM37) (Yeast).